The following is a 404-amino-acid chain: uncharacterized protein (404 aa).

The next 6 membrane-spanning stretches (helical) occupy residues 37–57 (LLIL…FVQF), 92–112 (IYNV…FVLG), 122–142 (LLTL…SYIP), 188–208 (MFYA…ILII), 230–250 (IGGI…TIGT), and 272–292 (AFFL…LGIF).

Its subcellular location is the cell membrane. This is an uncharacterized protein from Mycoplasma pneumoniae (strain ATCC 29342 / M129 / Subtype 1) (Mycoplasmoides pneumoniae).